Here is a 234-residue protein sequence, read N- to C-terminus: 2-amino-5-formylamino-6-ribosylaminopyrimidin-4(3H)-one 5'-monophosphate deformylase (234 aa).

Residues E29, H31, D40, and H109 each contribute to the Fe cation site.

It belongs to the creatininase superfamily. FAPy deformylase family. In terms of assembly, homodimer. Requires Fe(2+) as cofactor. It depends on Zn(2+) as a cofactor.

It catalyses the reaction 2-amino-5-formylamino-6-(5-phospho-D-ribosylamino)pyrimidin-4(3H)-one + H2O = 2,5-diamino-6-(1-D-ribosylamino)pyrimidin-4(3H)-one 5'-phosphate + formate + H(+). The protein operates within cofactor biosynthesis; coenzyme F420 biosynthesis. It functions in the pathway cofactor biosynthesis; riboflavin biosynthesis. In terms of biological role, catalyzes the hydrolysis of the formamide of 2-amino-5-formylamino-6-ribosylamino-4(3H)-pyrimidinone 5'-monophosphate (FAPy) to form 2,5-diamino-6-ribosylamino-4(3H)-pyrimidinone 5'-phosphate (APy). The sequence is that of 2-amino-5-formylamino-6-ribosylaminopyrimidin-4(3H)-one 5'-monophosphate deformylase from Methanobrevibacter ruminantium (strain ATCC 35063 / DSM 1093 / JCM 13430 / OCM 146 / M1) (Methanobacterium ruminantium).